We begin with the raw amino-acid sequence, 968 residues long: Translation initiation factor IF-2 (968 aa).

The segment covering 51-76 (PAAGASKSEAPAAAPKAPASPAATRP) has biased composition (low complexity). Residues 51–369 (PAAGASKSEA…GVSVPRGDGN (319 aa)) are disordered. Over residues 77-87 (APAPGPAAPKA) the composition is skewed to pro residues. Low complexity predominate over residues 93–102 (EAPAAASAPS). The segment covering 103–112 (APAPAAPAPA) has biased composition (pro residues). Composition is skewed to low complexity over residues 113–122 (APAAAASAPS), 128–170 (APST…GNNP), and 239–254 (GARP…PGAR). Gly residues predominate over residues 281 to 336 (GRPGGGGRGPGRPGGAPGTGGAPGAGGGAPAGGGFGKGGRGRGGTQGAFGKGGAGR). Residues 337–346 (GKQRKSKRAK) are compositionally biased toward basic residues. Residues 461 to 632 (ARPPVVTVMG…AVLLTADAAL (172 aa)) form the tr-type G domain. A G1 region spans residues 470–477 (GHVDHGKT). 470 to 477 (GHVDHGKT) contributes to the GTP binding site. The interval 495–499 (GITQH) is G2. Residues 520 to 523 (DTPG) form a G3 region. GTP is bound by residues 520 to 524 (DTPGH) and 574 to 577 (NKID). The tract at residues 574–577 (NKID) is G4. The tract at residues 610-612 (SAR) is G5.

Belongs to the TRAFAC class translation factor GTPase superfamily. Classic translation factor GTPase family. IF-2 subfamily.

The protein localises to the cytoplasm. One of the essential components for the initiation of protein synthesis. Protects formylmethionyl-tRNA from spontaneous hydrolysis and promotes its binding to the 30S ribosomal subunits. Also involved in the hydrolysis of GTP during the formation of the 70S ribosomal complex. The sequence is that of Translation initiation factor IF-2 from Arthrobacter sp. (strain FB24).